Here is a 107-residue protein sequence, read N- to C-terminus: Phosphoribosyl-ATP pyrophosphatase (107 aa).

The protein belongs to the PRA-PH family.

It localises to the cytoplasm. The catalysed reaction is 1-(5-phospho-beta-D-ribosyl)-ATP + H2O = 1-(5-phospho-beta-D-ribosyl)-5'-AMP + diphosphate + H(+). It functions in the pathway amino-acid biosynthesis; L-histidine biosynthesis; L-histidine from 5-phospho-alpha-D-ribose 1-diphosphate: step 2/9. In Sinorhizobium fredii (strain NBRC 101917 / NGR234), this protein is Phosphoribosyl-ATP pyrophosphatase.